The sequence spans 92 residues: Small ribosomal subunit protein uS19 (92 aa).

The protein belongs to the universal ribosomal protein uS19 family.

Functionally, protein S19 forms a complex with S13 that binds strongly to the 16S ribosomal RNA. The polypeptide is Small ribosomal subunit protein uS19 (Leptospira biflexa serovar Patoc (strain Patoc 1 / Ames)).